Consider the following 735-residue polypeptide: Polyribonucleotide nucleotidyltransferase (735 aa).

Residues Asp-515 and Asp-521 each coordinate Mg(2+). Residues 581–641 (PKLELFSVDP…KNVDAAKDYI (61 aa)) form the KH domain. The disordered stretch occupies residues 649–671 (NSRGFGKKPHGHDRRDKDRQKPT). Residues 675–734 (GDEFDGVVKSVVDFGAFIELKDGVDGLLHISKIKTPLNVGDRLKVCVSEQKGNKISLSLV) form the S1 motif domain.

Belongs to the polyribonucleotide nucleotidyltransferase family. Mg(2+) serves as cofactor.

The protein localises to the cytoplasm. It catalyses the reaction RNA(n+1) + phosphate = RNA(n) + a ribonucleoside 5'-diphosphate. In terms of biological role, involved in mRNA degradation. Catalyzes the phosphorolysis of single-stranded polyribonucleotides processively in the 3'- to 5'-direction. This is Polyribonucleotide nucleotidyltransferase from Campylobacter curvus (strain 525.92).